The primary structure comprises 473 residues: Cannabinoid receptor 1 (473 aa).

Residues 1–117 (MKSILDGLAD…CFMILNPSQQ (117 aa)) are Extracellular-facing. The tract at residues 2–23 (KSILDGLADTTFRTITTDLLYV) is required for mitochondrial localization. Asn-78 and Asn-84 each carry an N-linked (GlcNAc...) asparagine glycan. A helical membrane pass occupies residues 118–143 (LAIAVLSLTLGTFTVLENLLVLCVIL). At 144-155 (HSRSLRCRPSYH) the chain is on the cytoplasmic side. The chain crosses the membrane as a helical span at residues 156-176 (FIGSLAVADLLGSVIFVYSFV). At 177-188 (DFHVFHRKDSPN) the chain is on the extracellular side. The chain crosses the membrane as a helical span at residues 189-213 (VFLFKLGGVTASFTASVGSLFLTAI). Residues 214–233 (DRYISIHRPLAYKRIVTRPK) lie on the Cytoplasmic side of the membrane. A helical transmembrane segment spans residues 234 to 256 (AVVAFCLMWTIAIVIAVLPLLGW). Topologically, residues 257 to 274 (NCKKLQSVCSDIFPLIDE) are extracellular. A helical transmembrane segment spans residues 275–300 (TYLMFWIGVTSVLLLFIVYAYMYILW). The Cytoplasmic segment spans residues 301–345 (KAHSHAVRMIQRGTQKSIIIHTSEDGKVQVTRPDQARMDIRLAKT). A helical membrane pass occupies residues 346-366 (LVLILVVLIICWGPLLAIMVY). The Extracellular segment spans residues 367–378 (DVFGKMNKLIKT). A helical membrane pass occupies residues 379-400 (VFAFCSMLCLLNSTVNPIIYAL). Residues 401 to 473 (RSKDLRHAFR…VSTDTSAEAL (73 aa)) are Cytoplasmic-facing. Residue Cys-416 is the site of S-palmitoyl cysteine attachment. 2 positions are modified to phosphoserine: Ser-426 and Ser-430.

It belongs to the G-protein coupled receptor 1 family. As to quaternary structure, interacts (via C-terminus) with CNRIP1. Associates with G protein alpha subunits, including G(i) alpha-1/GNAI1, G(i) alpha-3/GNAI3 and G(o)-alpha/GNAO1; palmitoylation is important for interaction with GNAI3 and GNAO1. In terms of processing, palmitoylation at Cys-416 is important for recruitment at both plasma membrane and lipid rafts and association with G protein alpha subunits. Expressed in the brain, in the striatum, medial septum, descending arm of the band of Broca, the amygdaloid nucleus, the hippocampus and cortex (at protein level). High levels in the lateral striatum. In rostral brain regions, high expression levels in the dorsal lateral striatum, while in the caudal brain regions, high levels are observed in the ventral lateral striatum. Expressed in monocytes/macrophages (at protein level). Expressed in striated muscles and in vascular smooth muscles cells (at protein level).

The protein localises to the cell membrane. Its subcellular location is the mitochondrion outer membrane. It is found in the cell projection. It localises to the axon. The protein resides in the presynapse. With respect to regulation, hemopressin, a peptide derived from hemoglobin subunit alpha (HBA1 and/or HBA2), acts as an antagonist peptide: hemopressin-binding efficiently blocks cannabinoid receptor CNR1 and subsequent signaling. Functionally, G-protein coupled receptor for cannabinoids, including endocannabinoids (eCBs), such as N-arachidonoylethanolamide (also called anandamide or AEA) and 2-arachidonoylglycerol (2-AG). Mediates many cannabinoid-induced effects, acting, among others, on food intake, memory loss, gastrointestinal motility, catalepsy, ambulatory activity, anxiety, chronic pain. Signaling typically involves reduction in cyclic AMP. In the hypothalamus, may have a dual effect on mitochondrial respiration depending upon the agonist dose and possibly upon the cell type. Increases respiration at low doses, while decreases respiration at high doses. At high doses, CNR1 signal transduction involves G-protein alpha-i protein activation and subsequent inhibition of mitochondrial soluble adenylate cyclase, decrease in cyclic AMP concentration, inhibition of protein kinase A (PKA)-dependent phosphorylation of specific subunits of the mitochondrial electron transport system, including NDUFS2. In the hypothalamus, inhibits leptin-induced reactive oxygen species (ROS) formation and mediates cannabinoid-induced increase in SREBF1 and FASN gene expression. In response to cannabinoids, drives the release of orexigenic beta-endorphin, but not that of melanocyte-stimulating hormone alpha/alpha-MSH, from hypothalamic POMC neurons, hence promoting food intake. In the hippocampus, regulates cellular respiration and energy production in response to cannabinoids. Involved in cannabinoid-dependent depolarization-induced suppression of inhibition (DSI), a process in which depolarization of CA1 postsynaptic pyramidal neurons mobilizes eCBs, which retrogradely activate presynaptic CB1 receptors, transiently decreasing GABAergic inhibitory neurotransmission. Also reduces excitatory synaptic transmission. In superior cervical ganglions and cerebral vascular smooth muscle cells, inhibits voltage-gated Ca(2+) channels in a constitutive, as well as agonist-dependent manner. Induces leptin production in adipocytes and reduces LRP2-mediated leptin clearance in the kidney, hence participating in hyperleptinemia. In adipose tissue, CNR1 signaling leads to increased expression of SREBF1, ACACA and FASN genes. In the liver, activation by endocannabinoids leads to increased de novo lipogenesis and reduced fatty acid catabolism, associated with increased expression of SREBF1/SREBP-1, GCK, ACACA, ACACB and FASN genes. May also affect de novo cholesterol synthesis and HDL-cholesteryl ether uptake. Peripherally modulates energy metabolism. In high carbohydrate diet-induced obesity, may decrease the expression of mitochondrial dihydrolipoyl dehydrogenase/DLD in striated muscles, as well as that of selected glucose/ pyruvate metabolic enzymes, hence affecting energy expenditure through mitochondrial metabolism. In response to cannabinoid anandamide, elicits a pro-inflammatory response in macrophages, which involves NLRP3 inflammasome activation and IL1B and IL18 secretion. In macrophages infiltrating pancreatic islets, this process may participate in the progression of type-2 diabetes and associated loss of pancreatic beta-cells. The chain is Cannabinoid receptor 1 (Cnr1) from Rattus norvegicus (Rat).